A 465-amino-acid polypeptide reads, in one-letter code: Cysteine--tRNA ligase (465 aa).

Cys-30 provides a ligand contact to Zn(2+). The 'HIGH' region motif lies at Ile-32–His-42. Zn(2+) is bound by residues Cys-214, His-239, and Glu-243. Positions Lys-271 to Ser-275 match the 'KMSKS' region motif. Residue Lys-274 participates in ATP binding.

The protein belongs to the class-I aminoacyl-tRNA synthetase family. As to quaternary structure, monomer. Zn(2+) is required as a cofactor.

Its subcellular location is the cytoplasm. The enzyme catalyses tRNA(Cys) + L-cysteine + ATP = L-cysteinyl-tRNA(Cys) + AMP + diphosphate. This is Cysteine--tRNA ligase from Burkholderia ambifaria (strain ATCC BAA-244 / DSM 16087 / CCUG 44356 / LMG 19182 / AMMD) (Burkholderia cepacia (strain AMMD)).